The chain runs to 145 residues: Maximins 3/H3 type 2 (145 aa).

The first 18 residues, M1–A18, serve as a signal peptide directing secretion. 2 consecutive propeptides follow at residues R19–I43 and R74–R124. Residue I144 is modified to Isoleucine amide.

Belongs to the bombinin family. As to expression, expressed by the skin glands.

The protein localises to the secreted. Maximin-3 shows antibacterial activity against both Gram-positive and Gram-negative bacteria. It also shows antimicrobial activity against the fungus C.albicans, but not against A.flavus nor P.uticale. It has little hemolytic activity. It possess a significant cytotoxicity against tumor cell lines. It possess a significant anti-HIV activity. It shows high spermicidal activity. Its function is as follows. Maximin-H3 shows antibacterial activity against both Gram-positive and Gram-negative bacteria. It also shows antimicrobial activity against the fungus C.albicans. Shows strong hemolytic activity. This chain is Maximins 3/H3 type 2, found in Bombina maxima (Giant fire-bellied toad).